Reading from the N-terminus, the 434-residue chain is 3-phosphoshikimate 1-carboxyvinyltransferase (434 aa).

3-phosphoshikimate-binding residues include lysine 15, serine 16, and arginine 20. Phosphoenolpyruvate is bound at residue lysine 15. Positions 96 and 124 each coordinate phosphoenolpyruvate. Residues serine 169, glutamine 171, serine 195, aspartate 319, and lysine 346 each coordinate 3-phosphoshikimate. Phosphoenolpyruvate is bound at residue glutamine 171. Aspartate 319 serves as the catalytic Proton acceptor. Arginine 350 and arginine 394 together coordinate phosphoenolpyruvate.

Belongs to the EPSP synthase family. Monomer.

The protein localises to the cytoplasm. The catalysed reaction is 3-phosphoshikimate + phosphoenolpyruvate = 5-O-(1-carboxyvinyl)-3-phosphoshikimate + phosphate. Its pathway is metabolic intermediate biosynthesis; chorismate biosynthesis; chorismate from D-erythrose 4-phosphate and phosphoenolpyruvate: step 6/7. Functionally, catalyzes the transfer of the enolpyruvyl moiety of phosphoenolpyruvate (PEP) to the 5-hydroxyl of shikimate-3-phosphate (S3P) to produce enolpyruvyl shikimate-3-phosphate and inorganic phosphate. The sequence is that of 3-phosphoshikimate 1-carboxyvinyltransferase from Prosthecochloris aestuarii (strain DSM 271 / SK 413).